The primary structure comprises 100 residues: MGALTKAEIAERLYEELGLNKREAKELVELFFEEIRQALEQNEQVKLSGFGNFDLRDKRQRPGRNPKTGEEIPITARRVVTFRPGQKLKARVEAYAGTKS.

The tract at residues 53-73 is disordered; sequence FDLRDKRQRPGRNPKTGEEIP.

Belongs to the bacterial histone-like protein family. In terms of assembly, heterodimer of an alpha and a beta chain.

Functionally, this protein is one of the two subunits of integration host factor, a specific DNA-binding protein that functions in genetic recombination as well as in transcriptional and translational control. In Pseudomonas aeruginosa (strain LESB58), this protein is Integration host factor subunit alpha.